A 249-amino-acid polypeptide reads, in one-letter code: MTHQPQQSPQFFLTAPSPCPYLEGQQERKVFTHLVGDKANEINDLLTQGGFRRSRNIAYRPACEVCRACISVRILAGEFEMTRNMRRVWSQNRDLIGRVHKAQPSTEQYALFRDYLDARHRSGGMSDMTVLDYAMMIEDTHVNTQIIEYRRRGPDSFMSAKGDGELIAVALTDVMADGLSMVYSFFLPHMQERSLGTYMILDHIERARAAGLPHVYLGYWVEGSRKMQYKIRFTPQEHLGPRGWQRFEG.

It belongs to the R-transferase family. Bpt subfamily.

It is found in the cytoplasm. It carries out the reaction N-terminal L-glutamyl-[protein] + L-leucyl-tRNA(Leu) = N-terminal L-leucyl-L-glutamyl-[protein] + tRNA(Leu) + H(+). It catalyses the reaction N-terminal L-aspartyl-[protein] + L-leucyl-tRNA(Leu) = N-terminal L-leucyl-L-aspartyl-[protein] + tRNA(Leu) + H(+). Its function is as follows. Functions in the N-end rule pathway of protein degradation where it conjugates Leu from its aminoacyl-tRNA to the N-termini of proteins containing an N-terminal aspartate or glutamate. This is Aspartate/glutamate leucyltransferase from Brucella abortus (strain S19).